Consider the following 2192-residue polypeptide: BEACH domain-containing protein lvsE (2192 aa).

Disordered stretches follow at residues 948–969 (STSLSTSSITPPPPNSRNTSTG), 996–1065 (TTTT…DEPE), 1160–1303 (NESQ…NNLS), and 1343–1363 (DENGVDVSSPNSSSLSSSSSN). Residues 996–1049 (TTTTTTTTTTTTTTSTTSNTGNDSPLSIESPISSPVLIENTTNTTNTTTTNTTN) show a composition bias toward low complexity. Polar residues predominate over residues 1171–1187 (NIDNLNPNTGLPYNKST). Residues 1188-1231 (NNLSNVNNVNNNNNNNSNNINVSGNNTIGPSSSKSPLRNSRSMS) show a composition bias toward low complexity. A compositionally biased stretch (polar residues) spans 1232-1243 (IGSSATKSPSRQ). 2 stretches are compositionally biased toward low complexity: residues 1253-1303 (NNNS…NNLS) and 1350-1363 (SSPNSSSLSSSSSN). Positions 1366-1491 (IEEEKFIGSW…ESIQIFNKIV (126 aa)) constitute a BEACH-type PH domain. The BEACH domain maps to 1504–1795 (DHPSKIIKKS…QLFSKPHPIR (292 aa)). Positions 1823–1849 (GTINSSFSSTSTSTSTSSPPPSTLNSP) are enriched in low complexity. Residues 1823-1851 (GTINSSFSSTSTSTSTSSPPPSTLNSPQG) form a disordered region. WD repeat units lie at residues 1973–2012 (FHHDMVTCISLGSNGKHFATASSDTTILVWNDVDHLIKDS), 2022–2061 (SHDEPVHCLDINEEWDLIASGSMDKKLILHSLGKGHYQRS), and 2156–2192 (DSPAAIKTIELVAHEKYMLIGLNDGNLVIIPFDVKDL).

The protein is BEACH domain-containing protein lvsE (lvsE) of Dictyostelium discoideum (Social amoeba).